We begin with the raw amino-acid sequence, 280 residues long: Nitrogenase iron protein (280 aa).

9 to 16 (GKGGIGKS) is an ATP binding site. Cys97 lines the [4Fe-4S] cluster pocket. At Arg100 the chain carries ADP-ribosylarginine; by dinitrogenase reductase ADP-ribosyltransferase. Residue Cys132 participates in [4Fe-4S] cluster binding.

Belongs to the NifH/BchL/ChlL family. As to quaternary structure, homodimer. Requires [4Fe-4S] cluster as cofactor. In terms of processing, the reversible ADP-ribosylation of Arg-100 inactivates the nitrogenase reductase and regulates nitrogenase activity.

The enzyme catalyses N2 + 8 reduced [2Fe-2S]-[ferredoxin] + 16 ATP + 16 H2O = H2 + 8 oxidized [2Fe-2S]-[ferredoxin] + 2 NH4(+) + 16 ADP + 16 phosphate + 6 H(+). Functionally, the key enzymatic reactions in nitrogen fixation are catalyzed by the nitrogenase complex, which has 2 components: the iron protein and the molybdenum-iron protein. The chain is Nitrogenase iron protein from Desulforudis audaxviator (strain MP104C).